The primary structure comprises 409 residues: Accessory Sec system protein translocase subunit SecY2 (409 aa).

10 helical membrane passes run Ile-16–Gly-36, Leu-61–Leu-81, Val-104–His-124, Leu-132–Leu-152, Met-161–Phe-181, Leu-190–Glu-210, Gly-242–Leu-262, Gly-286–Ile-306, Leu-341–Ala-361, and Thr-374–Ile-394.

This sequence belongs to the SecY/SEC61-alpha family. SecY2 subfamily. As to quaternary structure, component of the accessory SecA2/SecY2 protein translocase complex required to export cell wall proteins. May form heterotrimers with SecE and SecG subunits.

The protein localises to the cell membrane. Functionally, part of the accessory SecA2/SecY2 system specifically required for export of possible cell wall proteins. The central subunit of a protein translocation channel. The sequence is that of Accessory Sec system protein translocase subunit SecY2 from Streptococcus agalactiae serotype III (strain NEM316).